Consider the following 192-residue polypeptide: Pupal cuticle protein (192 aa).

The first 15 residues, 1 to 15 (MHLLMSLFGVLAVMQ), serve as a signal peptide directing secretion. One can recognise a Chitin-binding type R&amp;R domain in the interval 45 to 106 (DGNYRYAYET…PVGDHIPKVP (62 aa)). A compositionally biased stretch (polar residues) spans 149 to 163 (QDQTTPRSRPSSTPK). The tract at residues 149–192 (QDQTTPRSRPSSTPKTIYLTHPPTLSDAPTRRPLRQRQNDSRRR) is disordered.

Its function is as follows. Component of the cuticle of the pupa of fruit fly. This Drosophila pseudoobscura pseudoobscura (Fruit fly) protein is Pupal cuticle protein (Pcp).